A 372-amino-acid polypeptide reads, in one-letter code: Transcription factor YY2 (372 aa).

The interval 32–102 (MEDIPTESVQ…SDNQLGNDLE (71 aa)) is mediates transcriptional activation. The segment covering 126–136 (SAASTSTSTQS) has biased composition (low complexity). Disordered regions lie at residues 126–172 (SAAS…WEQK) and 186–210 (TMWSPNDNNDQGAVGEGQAENPPDY). Basic residues predominate over residues 137-146 (RSKKPSKKPS). 2 stretches are compositionally biased toward polar residues: residues 154–165 (EANPAGSSSSLG) and 186–196 (TMWSPNDNNDQ). Residues 237 to 372 (EFTKVKPKRS…LTHVKTKNNP (136 aa)) form a mediates transcriptional repression region. 4 consecutive C2H2-type zinc fingers follow at residues 254–278 (VPCSYSGCEKMFRDYAAMRKHLHIH), 283–305 (HVCAECGKAFLESSKLRRHQLVH), 311–335 (FQCTFEGCGKRFSLDFNLRTHLRIH), and 341–365 (FVCPFDVCNRKFAQSTNLKTHILTH).

Belongs to the YY transcription factor family. As to expression, expressed in kidney, liver, spleen and testis but not in colon.

Its subcellular location is the nucleus. Its function is as follows. Functions as a multifunctional transcription factor that may exhibit positive and negative control on a large number of genes. May antagonize YY1 and function in development and differentiation. This chain is Transcription factor YY2 (YY2), found in Homo sapiens (Human).